A 576-amino-acid polypeptide reads, in one-letter code: MNIFNQLKQDIIVASRQLYNNQEIANTATIEIPKDSFNGDLSSNIAMIIAAKESIAPREVALKFKEVLITLPYIASIEIAGPGFINFTIKADSWQASIKDILQHEEKFFEIDIDKSKNINIEYVSANPTGPMHIGHARGAIYGDVLARILQKVSYSVTKEYYVNDAGSQINDLVSTVLLRYKEALGEQITIPAGLYPGEYLIPLGQILAKEYGNKLLTMNYAERFKIIKSFAVEKMLDLNRKDLADLGIKHDIFFSEQSLHDKGEIEETVKLLERMGLIYEGTLPAPKGKIHEEWDNRVQKLFKSTKYGDSQDRPIEKADGSWSYFASDLAYAKDKIERGANHLIYVLGADHSGYVKRIEAIVKALGKEQVKVDVKICQLVNFVENGVPVKMSKRLGSFASVQDVNHEVGKDIIRFMMLTRQNDKPLDFDLVKVKEQSRENPIFYVQYAHVRTISILSKAKELMPESYNNFESGKYDLSLLSSEEEIEIIKLLASWTKTLEASAKYFEPHRIAFYLINLASKFHSMWNFGKENSDYRFVIESNKELTLARLALASAIQKVIASGLEVIGVEPMNKM.

Residues 126 to 136 (ANPTGPMHIGH) carry the 'HIGH' region motif.

Belongs to the class-I aminoacyl-tRNA synthetase family. Monomer.

The protein localises to the cytoplasm. It carries out the reaction tRNA(Arg) + L-arginine + ATP = L-arginyl-tRNA(Arg) + AMP + diphosphate. The chain is Arginine--tRNA ligase from Rickettsia africae (strain ESF-5).